The chain runs to 378 residues: MEGLNMSLECTPASRSNGTCYGLAVCGYCYDFVETRQVVKEYEQFNLVVIGLMLPLIGCLGLIGNALSAFTYSRREMISSLNVYLFALACSDIVIILTAFFLFFLENMRKRSEWATYYFAVLSPVMFPLGLTAQTMSVFITVASAFDCLVLVAASEKFKSKFCSVNTSILVGNFNDFKNVIVCLKIIVKIFLLGIFYNSPHMYEIYVIDCWSTMYNTASKDVCPTALRSNVDYVRIYYVYMYTIVMAVGPVLLLIVINTAIVISMRRSSSPNSESDIITLVLVVCLFISCNVLPLTVNFLELLFGIINSYLIDLSNLMVVVNSSCNFLIYYTFGSNFRRTLRYYVRAALNRRAPAQNAANNRTPPRVKLCLPPTEVLI.

7 consecutive transmembrane segments (helical) span residues 47–67, 85–105, 120–140, 180–200, 243–263, 277–297, and 315–337; these read LVVIGLMLPLIGCLGLIGNAL, LFALACSDIVIILTAFFLFFL, AVLSPVMFPLGLTAQTMSVFI, VIVCLKIIVKIFLLGIFYNSP, TIVMAVGPVLLLIVINTAIVI, IITLVLVVCLFISCNVLPLTV, and SNLMVVVNSSCNFLIYYTFGSNF.

This sequence belongs to the G-protein coupled receptor 1 family.

Its subcellular location is the cell membrane. This is Probable G-protein coupled receptor frpr-1 from Caenorhabditis elegans.